Here is a 152-residue protein sequence, read N- to C-terminus: UPF0225 protein YchJ (152 aa).

This sequence belongs to the UPF0225 family.

This is UPF0225 protein YchJ from Escherichia coli O81 (strain ED1a).